The following is a 569-amino-acid chain: MLO-like protein 10 (569 aa).

Topologically, residues 1–41 (MATRCFWCWTTLLFCSQLLTGFARASSAGGAKEKGLSQTPT) are extracellular. The helical transmembrane segment at 42 to 62 (WAVALVCTFFILVSVLLEKAL) threads the bilayer. Residues 63–85 (HRVATWLWEKHKNSLLEALEKIK) lie on the Cytoplasmic side of the membrane. A helical transmembrane segment spans residues 86 to 106 (AELMILGFISLLLTFGEQYIL). Over 107-163 (KICIPEKAAASMLPCPAPSTHDQDKTHRRRLAAATTSSRCDEGHEPLIPATGLHQLH) the chain is Extracellular. A helical transmembrane segment spans residues 164-184 (ILLFFMAAFHILYSFITMMLG). At 185–286 (RLKIRGWKKW…IKRSLEDDFK (102 aa)) the chain is on the cytoplasmic side. A helical transmembrane segment spans residues 287–307 (VVVGISPLLWASFVIFLLLNV). Position 308 (N308) is a topological domain, extracellular. Residues 309–329 (GWEALFWASILPVLIILAVST) form a helical membrane-spanning segment. The Cytoplasmic portion of the chain corresponds to 330–372 (KLQAILTRMALGITERHAVVQGIPLVHGSDKYFWFNRPQLLLH). The helical transmembrane segment at 373-393 (LLHFALFQNAFQLTYFFWVWY) threads the bilayer. Residues 394 to 413 (SFGLKSCFHTDFKLVIVKLS) lie on the Extracellular side of the membrane. The helical transmembrane segment at 414–434 (LGVGALILCSYITLPLYALVT) threads the bilayer. At 435–569 (QMGSNMKKAV…VKNVPANDID (135 aa)) the chain is on the cytoplasmic side. The segment at 447 to 468 (EQMAKALKKWHMTVKKKKGKAR) is calmodulin-binding.

It belongs to the MLO family.

It localises to the membrane. Functionally, may be involved in modulation of pathogen defense and leaf cell death. Activity seems to be regulated by Ca(2+)-dependent calmodulin binding and seems not to require heterotrimeric G proteins. This chain is MLO-like protein 10 (MLO10), found in Arabidopsis thaliana (Mouse-ear cress).